An 890-amino-acid polypeptide reads, in one-letter code: Inter-alpha-trypsin inhibitor heavy chain H3 (890 aa).

Residues 1-20 (MAFAWWPCLILALLSSLAAS) form the signal peptide. Positions 21–34 (GFPRSPFRLLGKRS) are excised as a propeptide. The VIT domain occupies 29–158 (LLGKRSLPEG…KVTFELTYEE (130 aa)). N-linked (GlcNAc...) asparagine glycosylation is present at asparagine 91. Residues 284–467 (NVAFVIDISG…LQLQGFYEEV (184 aa)) enclose the VWFA domain. Asparagine 580 carries an N-linked (GlcNAc...) asparagine glycan. Residue aspartate 651 is modified to Aspartate 1-(chondroitin 4-sulfate)-ester. The propeptide occupies 652 to 890 (PHFIIQIPEK…HTDYIVPNLF (239 aa)).

The protein belongs to the ITIH family. In terms of assembly, I-alpha-I plasma protease inhibitors are assembled from one or two heavy chains (HC) and one light chain, bikunin. Pre-alpha-inhibitor (P-alpha-I) is composed of ITIH3/HC3 and bikunin. Post-translationally, heavy chains are linked to bikunin via chondroitin 4-sulfate esterified to the alpha-carboxyl of the C-terminal aspartate after propeptide cleavage.

The protein resides in the secreted. May act as a carrier of hyaluronan in serum or as a binding protein between hyaluronan and other matrix protein, including those on cell surfaces in tissues to regulate the localization, synthesis and degradation of hyaluronan which are essential to cells undergoing biological processes. This Homo sapiens (Human) protein is Inter-alpha-trypsin inhibitor heavy chain H3 (ITIH3).